Consider the following 519-residue polypeptide: NADH-ubiquinone oxidoreductase chain 4 (519 aa).

A run of 14 helical transmembrane segments spans residues 2–22, 68–88, 112–132, 146–166, 167–187, 196–216, 239–259, 270–290, 304–324, 333–353, 360–380, 399–419, 437–457, and 484–504; these read SGLL…ILSF, IAFI…ILFD, VDGL…IALI, LIII…LDVL, LFYI…GLFG, FYIF…ILTM, IFLF…VFLN, PLGG…YGIF, YTSI…FSTL, IAYS…SNII, ILLG…AGGV, VMPL…GAPL, LPLL…YTIY, and FFLL…PSFI.

It belongs to the complex I subunit 4 family.

Its subcellular location is the mitochondrion membrane. It catalyses the reaction a ubiquinone + NADH + 5 H(+)(in) = a ubiquinol + NAD(+) + 4 H(+)(out). Functionally, core subunit of the mitochondrial membrane respiratory chain NADH dehydrogenase (Complex I) that is believed to belong to the minimal assembly required for catalysis. Complex I functions in the transfer of electrons from NADH to the respiratory chain. The immediate electron acceptor for the enzyme is believed to be ubiquinone. The sequence is that of NADH-ubiquinone oxidoreductase chain 4 (ND4) from Podospora anserina (strain S / ATCC MYA-4624 / DSM 980 / FGSC 10383) (Pleurage anserina).